A 155-amino-acid chain; its full sequence is Ribosomal RNA large subunit methyltransferase H (155 aa).

Residues leucine 72, glycine 104, and 123–128 each bind S-adenosyl-L-methionine; that span reads LSKMTF.

Belongs to the RNA methyltransferase RlmH family. In terms of assembly, homodimer.

The protein localises to the cytoplasm. It catalyses the reaction pseudouridine(1915) in 23S rRNA + S-adenosyl-L-methionine = N(3)-methylpseudouridine(1915) in 23S rRNA + S-adenosyl-L-homocysteine + H(+). In terms of biological role, specifically methylates the pseudouridine at position 1915 (m3Psi1915) in 23S rRNA. The sequence is that of Ribosomal RNA large subunit methyltransferase H from Cytophaga hutchinsonii (strain ATCC 33406 / DSM 1761 / CIP 103989 / NBRC 15051 / NCIMB 9469 / D465).